The following is a 519-amino-acid chain: Pleckstrin homology domain-containing family A member 8 (519 aa).

Residues 1–93 form the PH domain; it reads MEGVLYKWTN…WLVALGSAKA (93 aa). Position 139 is a phosphothreonine (threonine 139). Serine 145 bears the Phosphoserine mark. Position 153 is a phosphothreonine (threonine 153). Residues 275–302 form a disordered region; it reads GEENLESHDKDPAQPGSDSVCSPESPWE. A glycolipid transfer protein homology domain region spans residues 330–473; sequence IPTEAFLASC…EDFVAALTIK (144 aa).

As to quaternary structure, homodimer. Interacts with ARF1; the interaction together with phosphatidylinositol 4-phosphate binding is required for FAPP2 GlcCer transfer ability.

Its subcellular location is the golgi apparatus. The protein localises to the trans-Golgi network membrane. It localises to the membrane. Its function is as follows. Cargo transport protein that is required for apical transport from the trans-Golgi network (TGN). Transports AQP2 from the trans-Golgi network (TGN) to sites of AQP2 phosphorylation. Mediates the non-vesicular transport of glucosylceramide (GlcCer) from the trans-Golgi network (TGN) to the plasma membrane and plays a pivotal role in the synthesis of complex glycosphingolipids. Binding of both phosphatidylinositol 4-phosphate (PIP) and ARF1 are essential for the GlcCer transfer ability. Also required for primary cilium formation, possibly by being involved in the transport of raft lipids to the apical membrane, and for membrane tubulation. The chain is Pleckstrin homology domain-containing family A member 8 (Plekha8) from Mus musculus (Mouse).